The chain runs to 461 residues: Cysteine--tRNA ligase (461 aa).

Cys28 provides a ligand contact to Zn(2+). The 'HIGH' region motif lies at Ile30–His40. Zn(2+)-binding residues include Cys209, His234, and Glu238. Positions Lys266–Ser270 match the 'KMSKS' region motif. Lys269 is an ATP binding site.

Belongs to the class-I aminoacyl-tRNA synthetase family. Monomer. Zn(2+) serves as cofactor.

The protein localises to the cytoplasm. It catalyses the reaction tRNA(Cys) + L-cysteine + ATP = L-cysteinyl-tRNA(Cys) + AMP + diphosphate. This Yersinia pseudotuberculosis serotype IB (strain PB1/+) protein is Cysteine--tRNA ligase.